Reading from the N-terminus, the 189-residue chain is Large ribosomal subunit protein eL18 (189 aa).

This sequence belongs to the eukaryotic ribosomal protein eL18 family.

Its subcellular location is the cytoplasm. The protein is Large ribosomal subunit protein eL18 (RpL18) of Anopheles gambiae (African malaria mosquito).